The chain runs to 263 residues: tRNA (guanine-N(7)-)-methyltransferase (263 aa).

The span at 1 to 10 shows a compositional bias: polar residues; the sequence is MLPQDPSTEP. The interval 1–38 is disordered; sequence MLPQDPSTEPTPADDAAPVDSAGQASAPSPADPEGVAH. Residues Glu91, Glu116, Asp143, and Asp166 each coordinate S-adenosyl-L-methionine. Asp166 is an active-site residue. Substrate is bound at residue Lys170. An interaction with RNA region spans residues 172-177; it reads RHNKRR. Substrate-binding positions include Asp202 and 240 to 243; that span reads TKFE.

This sequence belongs to the class I-like SAM-binding methyltransferase superfamily. TrmB family.

It carries out the reaction guanosine(46) in tRNA + S-adenosyl-L-methionine = N(7)-methylguanosine(46) in tRNA + S-adenosyl-L-homocysteine. Its pathway is tRNA modification; N(7)-methylguanine-tRNA biosynthesis. Functionally, catalyzes the formation of N(7)-methylguanine at position 46 (m7G46) in tRNA. This Cupriavidus necator (strain ATCC 17699 / DSM 428 / KCTC 22496 / NCIMB 10442 / H16 / Stanier 337) (Ralstonia eutropha) protein is tRNA (guanine-N(7)-)-methyltransferase.